The sequence spans 726 residues: ORC ubiquitin ligase 1 (726 aa).

The RING-type; degenerate zinc finger occupies 18 to 56 (CHICLGKVRQPVICINNHVFCSICIDLWLKNNSQCPACR). Coiled-coil stretches lie at residues 87-129 (LRKT…TILD) and 155-270 (ETVA…MNSI). Ser-210 is modified (phosphoserine). The interval 274–335 (ALPADGKGSK…ARQESTSKAE (62 aa)) is disordered. Basic and acidic residues predominate over residues 280–290 (KGSKGSEEDVA). A compositionally biased stretch (low complexity) spans 300 to 320 (KQPSSSTSSSSHLAKPSSSRL). Residues 321–334 (CDTSSARQESTSKA) show a composition bias toward polar residues. 7 positions are modified to phosphoserine: Ser-526, Ser-553, Ser-561, Ser-568, Ser-570, Ser-719, and Ser-721. The segment at 687–726 (QSPWSTSFVPEKRNKNVNQSTKRKIQSSLSNASPSKATKS) is disordered. The segment covering 702–726 (NVNQSTKRKIQSSLSNASPSKATKS) has biased composition (polar residues).

As to quaternary structure, associates with ORC complex. Binds to chromatin; association is cell cycle-regulated, absent from mitotic chromosomes, is associated with chromatin from G1 and partially released from chromatin from mid S-phase. Post-translationally, auto-ubiquitinated.

The protein localises to the chromosome. It carries out the reaction S-ubiquitinyl-[E2 ubiquitin-conjugating enzyme]-L-cysteine + [acceptor protein]-L-lysine = [E2 ubiquitin-conjugating enzyme]-L-cysteine + N(6)-ubiquitinyl-[acceptor protein]-L-lysine.. Its function is as follows. E3 ubiquitin ligase essential for DNA replication origin activation during S phase. Acts as a replication origin selector which selects the origins to be fired and catalyzes the multi-mono-ubiquitination of a subset of chromatin-bound ORC3 and ORC5 during S-phase. The polypeptide is ORC ubiquitin ligase 1 (OBI1) (Pongo abelii (Sumatran orangutan)).